The following is a 286-amino-acid chain: Nucleotide-binding protein VC_2532 (286 aa).

ATP is bound at residue 8 to 15 (GQSGAGKS). 56-59 (DIRN) contacts GTP.

The protein belongs to the RapZ-like family.

Functionally, displays ATPase and GTPase activities. This Vibrio cholerae serotype O1 (strain ATCC 39315 / El Tor Inaba N16961) protein is Nucleotide-binding protein VC_2532.